A 691-amino-acid chain; its full sequence is Hormonally up-regulated neu tumor-associated kinase homolog A (691 aa).

Residues 55 to 313 (YLIGRKLGEG…IQQALANRWL (259 aa)) enclose the Protein kinase domain. Residues 61–69 (LGEGSFAKV) and K84 each bind ATP. D179 serves as the catalytic Proton acceptor. Positions 406 to 425 (MNKNSYEERRSKDLEKRGEP) are enriched in basic and acidic residues. Disordered stretches follow at residues 406 to 475 (MNKN…GGLS), 499 to 518 (QSPDPRTPKIMRRQDSHSQE), 580 to 640 (FQFD…SRGR), and 655 to 679 (QVVSPKGEKPLETRMPPLHQMSPGY). Residues 440–453 (SHRQNACLTPQGHS) are compositionally biased toward polar residues. Basic and acidic residues predominate over residues 457–470 (PVKERRSSKSERES). The segment covering 582-597 (FDNTSPSKSHFNQASF) has biased composition (polar residues). Residues 604 to 620 (SPSSPESMSPTSPHSPS) are compositionally biased toward low complexity. A compositionally biased stretch (polar residues) spans 621–631 (CNNNISGNLGS).

The protein belongs to the protein kinase superfamily. CAMK Ser/Thr protein kinase family. SNF1 subfamily.

It catalyses the reaction L-seryl-[protein] + ATP = O-phospho-L-seryl-[protein] + ADP + H(+). The enzyme catalyses L-threonyl-[protein] + ATP = O-phospho-L-threonyl-[protein] + ADP + H(+). This Xenopus laevis (African clawed frog) protein is Hormonally up-regulated neu tumor-associated kinase homolog A (hunk-a).